The chain runs to 728 residues: Polyribonucleotide nucleotidyltransferase (728 aa).

Positions 509 and 515 each coordinate Mg(2+). The region spanning 576–638 (TKIYTFYIPK…TKLKIAILKI (63 aa)) is the KH domain. The S1 motif domain occupies 648 to 715 (GTIYKAKVKN…KFRKIKLSHK (68 aa)).

It belongs to the polyribonucleotide nucleotidyltransferase family. Mg(2+) is required as a cofactor.

It is found in the cytoplasm. It carries out the reaction RNA(n+1) + phosphate = RNA(n) + a ribonucleoside 5'-diphosphate. Its function is as follows. Involved in mRNA degradation. Catalyzes the phosphorolysis of single-stranded polyribonucleotides processively in the 3'- to 5'-direction. In Karelsulcia muelleri (strain GWSS) (Sulcia muelleri), this protein is Polyribonucleotide nucleotidyltransferase.